Here is a 637-residue protein sequence, read N- to C-terminus: Dihydrolipoyllysine-residue acetyltransferase component of pyruvate dehydrogenase complex, mitochondrial (637 aa).

The N-terminal 85 residues, 1–85 (MWRVCVRRAQ…LLGSPGRRSY (85 aa)), are a transit peptide targeting the mitochondrion. Residues 80 to 100 (PGRRSYSLPPHQKVPLPSLSP) form a disordered region. In terms of domain architecture, Lipoyl-binding 1 spans 90 to 166 (HQKVPLPSLS…PIGSIICITV (77 aa)). The residue at position 99 (Ser-99) is a Phosphoserine. Lys-131 is modified (N6-lipoyllysine). Disordered regions lie at residues 189-219 (QAAAPTPAPAPCAAPTAPSAKAPGSSYPPHM) and 307-340 (LKPQAPPPVPPPVAAAPPTAQPLAPTPSGLPAGP). Low complexity predominate over residues 201–211 (AAPTAPSAKAP). One can recognise a Lipoyl-binding 2 domain in the interval 218–287 (HMQVSAVGEQ…PLGAPLCIIV (70 aa)). Pro residues predominate over residues 310-321 (QAPPPVPPPVAA). Residues 322–333 (APPTAQPLAPTP) are compositionally biased toward low complexity. The Peripheral subunit-binding (PSBD) domain maps to 345–382 (FVSPLAKKLAAERGIDLTQVKGTGPEGRIIKKDIDSFV). Arg-451 lines the CoA pocket. Lys-456 bears the N6-acetyllysine mark. Lys-463 is modified (N6-succinyllysine). Ser-465 is a CoA binding site. Lys-537 carries the N6-succinyllysine modification. CoA contacts are provided by Ser-556, Asn-557, and Gly-581. Catalysis depends on residues His-610 and Asp-614.

The protein belongs to the 2-oxoacid dehydrogenase family. As to quaternary structure, part of the pyruvate dehydrogenase complex (PDHc) that is a multi-enzyme complex composed of multiple copies of three enzymes, pyruvate dehydrogenase (subunits PDH1A and PDHB, E1 component), dihydrolipoamide acetyltransferase (DLAT, E2 component), and dihydrolipoamide dehydrogenase (DLD, E3 component) to which is added an additional protein the E3-binding protein (PDHX, E3BP). In terms of structural architecture, the E2 and E3BP components assemble into a 60meric central core with icosahedral symmetry. The central core is decorated with E1 and E3 proteins. Currently, two alternative models for the E2:E3BP stoichiometry are considered as being either 48:12 (E2(48)-E3BP(12)) or 40:20 (E2(40)-E3BP(20)). Interacts with PDK2 and PDK3. Interacts with SIRT4. Interacts with PDHB. The cofactor is (R)-lipoate. Post-translationally, delipoylated at Lys-131 by SIRT4, delipoylation decreases the PHD complex activity. Detected at higher levels in cauda epididymal spermatazoa than in caput epididymal spermatazoa (at protein level).

Its subcellular location is the mitochondrion matrix. The enzyme catalyses N(6)-[(R)-dihydrolipoyl]-L-lysyl-[protein] + acetyl-CoA = N(6)-[(R)-S(8)-acetyldihydrolipoyl]-L-lysyl-[protein] + CoA. Functionally, as part of the pyruvate dehydrogenase complex, catalyzes the transfers of an acetyl group to a lipoic acid moiety. The pyruvate dehydrogenase complex, catalyzes the overall conversion of pyruvate to acetyl-CoA and CO(2), and thereby links cytoplasmic glycolysis and the mitochondrial tricarboxylic acid (TCA) cycle. This is Dihydrolipoyllysine-residue acetyltransferase component of pyruvate dehydrogenase complex, mitochondrial from Mesocricetus auratus (Golden hamster).